A 399-amino-acid chain; its full sequence is L-asparaginase-like protein GG20738 (399 aa).

The first 22 residues, M1–S22, serve as a signal peptide directing secretion. 3 disulfide bridges follow: C90–C95, C189–C205, and C344–C371.

This sequence belongs to the Ntn-hydrolase family.

This chain is L-asparaginase-like protein GG20738, found in Drosophila erecta (Fruit fly).